We begin with the raw amino-acid sequence, 449 residues long: UNC93-like protein MFSD11 (449 aa).

A helical transmembrane segment spans residues 8–28 (LFNIIILGVAFMFMFTAFQTC). N-linked (GlcNAc...) asparagine glycosylation occurs at Asn-40. 5 helical membrane passes run 53 to 73 (AIIYGVFSASNLITPPVVAIV), 74 to 94 (GPQLSMFASGLFYSMYIAVFN), 96 to 116 (PFPWSFYTASVFIGIAAAVLW), 138 to 158 (IFWALLQSSLFFGNLYVYFAW), and 170 to 190 (RTVFIALTVISLVGTVLFFLI). The residue at position 204 (Ser-204) is a Phosphoserine. A run of 6 helical transmembrane segments spans residues 239-259 (MLLLSITTAYTGLELTFFSGV), 277-297 (LIGLSGIFIGIGEILGGSLFG), 309-329 (PVVLLGILVHFIAFYLIFLNM), 359-379 (FLLGLGDSCFNTQLLSILGFL), 385-405 (APAFAIFKFVQSICAAVAFFY), and 410-430 (LLHWQLLVMVIFGFFGTLSFF).

Belongs to the unc-93 family.

It localises to the membrane. This chain is UNC93-like protein MFSD11 (MFSD11), found in Pongo abelii (Sumatran orangutan).